A 219-amino-acid chain; its full sequence is ATP-dependent dethiobiotin synthetase BioD (219 aa).

ATP is bound at residue 12 to 17; sequence GVGKTI. Thr-16 contributes to the Mg(2+) binding site. Lys-32 is a catalytic residue. Residues Asp-43 and 96-99 contribute to the ATP site; that span reads ETSG. Residues Asp-43 and Glu-96 each contribute to the Mg(2+) site.

The protein belongs to the dethiobiotin synthetase family. Homodimer. Mg(2+) is required as a cofactor.

The protein localises to the cytoplasm. It catalyses the reaction (7R,8S)-7,8-diammoniononanoate + CO2 + ATP = (4R,5S)-dethiobiotin + ADP + phosphate + 3 H(+). The protein operates within cofactor biosynthesis; biotin biosynthesis; biotin from 7,8-diaminononanoate: step 1/2. Its function is as follows. Catalyzes a mechanistically unusual reaction, the ATP-dependent insertion of CO2 between the N7 and N8 nitrogen atoms of 7,8-diaminopelargonic acid (DAPA, also called 7,8-diammoniononanoate) to form a ureido ring. The chain is ATP-dependent dethiobiotin synthetase BioD from Chlamydia pneumoniae (Chlamydophila pneumoniae).